A 99-amino-acid chain; its full sequence is Large ribosomal subunit protein uL23 (99 aa).

This sequence belongs to the universal ribosomal protein uL23 family. Part of the 50S ribosomal subunit. Contacts protein L29, and trigger factor when it is bound to the ribosome.

Its function is as follows. One of the early assembly proteins it binds 23S rRNA. One of the proteins that surrounds the polypeptide exit tunnel on the outside of the ribosome. Forms the main docking site for trigger factor binding to the ribosome. The protein is Large ribosomal subunit protein uL23 of Hyphomonas neptunium (strain ATCC 15444).